The following is a 273-amino-acid chain: Protein PERCC1 (273 aa).

Disordered regions lie at residues S18 to P84 and G253 to V273. Positions E28–Q56 are enriched in acidic residues. The span at D67 to T83 shows a compositional bias: polar residues.

In terms of tissue distribution, specifically expressed in the stomach, pancreas and intestine. In gastrointestinal tissue, expression is primarily restricted to gastric G cells and duodenal enteroendocrine cells (EECs).

Its function is as follows. Plays a critical role in intestinal function by promoting the development of enteroendocrine cells (EECs) of the gastrointestinal tract and pancreas. It is thereby required for normal enteroendocrine peptide hormone secretion. The sequence is that of Protein PERCC1 from Mus musculus (Mouse).